The primary structure comprises 231 residues: Large ribosomal subunit protein uL1 (231 aa).

Belongs to the universal ribosomal protein uL1 family. Part of the 50S ribosomal subunit.

Its function is as follows. Binds directly to 23S rRNA. The L1 stalk is quite mobile in the ribosome, and is involved in E site tRNA release. In terms of biological role, protein L1 is also a translational repressor protein, it controls the translation of the L11 operon by binding to its mRNA. The sequence is that of Large ribosomal subunit protein uL1 from Mycoplasmopsis agalactiae (strain NCTC 10123 / CIP 59.7 / PG2) (Mycoplasma agalactiae).